The chain runs to 223 residues: Holliday junction branch migration complex subunit RuvA (223 aa).

The tract at residues 1 to 67 is domain I; that stretch reads MIGWLKGEKI…EDGSNLFGFI (67 aa). The tract at residues 68 to 146 is domain II; that stretch reads EKSERDLFRK…DFDLNNEFSP (79 aa). Residues 147 to 157 form a flexible linker region; sequence PTKLRPESAED. The tract at residues 158 to 223 is domain III; it reads LNEELLTEIK…FKQALITLNK (66 aa).

It belongs to the RuvA family. In terms of assembly, homotetramer. Forms an RuvA(8)-RuvB(12)-Holliday junction (HJ) complex. HJ DNA is sandwiched between 2 RuvA tetramers; dsDNA enters through RuvA and exits via RuvB. An RuvB hexamer assembles on each DNA strand where it exits the tetramer. Each RuvB hexamer is contacted by two RuvA subunits (via domain III) on 2 adjacent RuvB subunits; this complex drives branch migration. In the full resolvosome a probable DNA-RuvA(4)-RuvB(12)-RuvC(2) complex forms which resolves the HJ.

It is found in the cytoplasm. Its function is as follows. The RuvA-RuvB-RuvC complex processes Holliday junction (HJ) DNA during genetic recombination and DNA repair, while the RuvA-RuvB complex plays an important role in the rescue of blocked DNA replication forks via replication fork reversal (RFR). RuvA specifically binds to HJ cruciform DNA, conferring on it an open structure. The RuvB hexamer acts as an ATP-dependent pump, pulling dsDNA into and through the RuvAB complex. HJ branch migration allows RuvC to scan DNA until it finds its consensus sequence, where it cleaves and resolves the cruciform DNA. This chain is Holliday junction branch migration complex subunit RuvA, found in Prochlorococcus marinus (strain MIT 9211).